Consider the following 741-residue polypeptide: Catalase-peroxidase 2 (741 aa).

The first 28 residues, 1-28 (MQKKRVGKSVVAALAIIAMSAGTVAAWA), serve as a signal peptide directing secretion. A cross-link (tryptophyl-tyrosyl-methioninium (Trp-Tyr) (with M-254)) is located at residues 107–228 (WHGAGTYRTY…LAATQMGLIY (122 aa)). Histidine 108 serves as the catalytic Proton acceptor. The segment at residues 228–254 (YVNPEGPNGNPDPVAAAKDIRDAFGRM) is a cross-link (tryptophyl-tyrosyl-methioninium (Tyr-Met) (with W-107)). Histidine 269 is a binding site for heme b.

The protein belongs to the peroxidase family. Peroxidase/catalase subfamily. In terms of assembly, homodimer or homotetramer. Heme b is required as a cofactor. Post-translationally, formation of the three residue Trp-Tyr-Met cross-link is important for the catalase, but not the peroxidase activity of the enzyme.

The enzyme catalyses H2O2 + AH2 = A + 2 H2O. It catalyses the reaction 2 H2O2 = O2 + 2 H2O. Bifunctional enzyme with both catalase and broad-spectrum peroxidase activity. In Burkholderia ambifaria (strain ATCC BAA-244 / DSM 16087 / CCUG 44356 / LMG 19182 / AMMD) (Burkholderia cepacia (strain AMMD)), this protein is Catalase-peroxidase 2.